Here is a 640-residue protein sequence, read N- to C-terminus: Phosphatidylinositol-binding clathrin assembly protein (640 aa).

An N-acetylserine modification is found at S2. Residues 14–145 (QHSVTGSAVS…VSYRQVAFDF (132 aa)) form the ENTH domain. Phosphoserine occurs at positions 16 and 20. Residues 221–294 (KYFDMKKNQC…LEGKKIKDST (74 aa)) are interaction with PIMREG. A Glycyl lysine isopeptide (Lys-Gly) (interchain with G-Cter in SUMO2) cross-link involves residue K238. Residues S303 and S315 each carry the phosphoserine modification. The tract at residues 543 to 568 (NGTTKNDVSCSQPGEKKLTGGSNWQP) is disordered. Polar residues predominate over residues 544–554 (GTTKNDVSCSQ).

Belongs to the PICALM/SNAP91 family. As to quaternary structure, binds to clathrin; involves primarily the C-terminal sequences, but the full-length protein is required for full binding capacity. Binds phosphatidylinositol 4,5- bisphosphate. Interacts with PIMREG; this interaction may change the subcellular location into the nucleus. Interacts with AP2A1 (via its alpha-appendage domain). Interacts (via N-terminus) with VAMP2; VAMP3; VAMP7 and VAMP8 (Via N-terminus). Interacts with LC3/MAP1LC3A. As to expression, isoform 2 was found in most tissues examined. Isoform 1 has an overlapping expression pattern but is absent from lung, heart and pancreas. Both isoforms are widely expressed in the brain, higher levels are seen in hippocampus, dentate gyrus, medial habenula nucleus and cerebellar granule cells.

It localises to the cell membrane. Its subcellular location is the membrane. The protein resides in the clathrin-coated pit. The protein localises to the golgi apparatus. It is found in the cytoplasmic vesicle. It localises to the clathrin-coated vesicle. Its subcellular location is the nucleus. Cytoplasmic adapter protein that plays a critical role in clathrin-mediated endocytosis which is important in processes such as internalization of cell receptors, synaptic transmission or removal of apoptotic cells. Recruits AP-2 and attaches clathrin triskelions to the cytoplasmic side of plasma membrane leading to clathrin-coated vesicles (CCVs) assembly. Furthermore, regulates clathrin-coated vesicle size and maturation by directly sensing and driving membrane curvature. In addition to binding to clathrin, mediates the endocytosis of small R-SNARES (Soluble NSF Attachment Protein REceptors) between plasma membranes and endosomes including VAMP2, VAMP3, VAMP4, VAMP7 or VAMP8. In turn, PICALM-dependent SNARE endocytosis is required for the formation and maturation of autophagic precursors. Modulates thereby autophagy and the turnover of autophagy substrates such as MAPT/TAU or amyloid precursor protein cleaved C-terminal fragment (APP-CTF). This is Phosphatidylinositol-binding clathrin assembly protein (Picalm) from Rattus norvegicus (Rat).